Consider the following 180-residue polypeptide: Large ribosomal subunit protein uL5 (180 aa).

Belongs to the universal ribosomal protein uL5 family. As to quaternary structure, part of the 50S ribosomal subunit; part of the 5S rRNA/L5/L18/L25 subcomplex. Contacts the 5S rRNA and the P site tRNA. Forms a bridge to the 30S subunit in the 70S ribosome.

In terms of biological role, this is one of the proteins that bind and probably mediate the attachment of the 5S RNA into the large ribosomal subunit, where it forms part of the central protuberance. In the 70S ribosome it contacts protein S13 of the 30S subunit (bridge B1b), connecting the 2 subunits; this bridge is implicated in subunit movement. Contacts the P site tRNA; the 5S rRNA and some of its associated proteins might help stabilize positioning of ribosome-bound tRNAs. The sequence is that of Large ribosomal subunit protein uL5 from Clostridium acetobutylicum (strain ATCC 824 / DSM 792 / JCM 1419 / IAM 19013 / LMG 5710 / NBRC 13948 / NRRL B-527 / VKM B-1787 / 2291 / W).